The sequence spans 88 residues: UPF0297 protein SPCG_0205 (88 aa).

It belongs to the UPF0297 family.

The chain is UPF0297 protein SPCG_0205 from Streptococcus pneumoniae (strain CGSP14).